The primary structure comprises 319 residues: Guanidinobutyrase (319 aa).

The Mn(2+) site is built by His-129, Asp-152, His-154, Asp-156, Asp-243, and Asp-245.

The protein belongs to the arginase family. Agmatinase subfamily. Homohexamer. Requires Mn(2+) as cofactor.

It catalyses the reaction 4-guanidinobutanoate + H2O = urea + 4-aminobutanoate. Catalyzes specifically the hydrolysis of 4-guanidinobutanoate to 4-aminobutanoate and urea. Has no activity against arginine, agmatine, 3-guanidinopropionate and guanidinoacetate. This chain is Guanidinobutyrase (gbuA), found in Pseudomonas aeruginosa (strain ATCC 15692 / DSM 22644 / CIP 104116 / JCM 14847 / LMG 12228 / 1C / PRS 101 / PAO1).